Consider the following 253-residue polypeptide: uncharacterized protein (253 aa).

The protein belongs to the DcsA family.

This is an uncharacterized protein from Bacillus subtilis (strain 168).